Reading from the N-terminus, the 446-residue chain is Trigger factor (446 aa).

The region spanning 182-267 (GDKVVVDYQN…VKNIFMMKAI (86 aa)) is the PPIase FKBP-type domain.

This sequence belongs to the FKBP-type PPIase family. Tig subfamily.

The protein localises to the cytoplasm. The enzyme catalyses [protein]-peptidylproline (omega=180) = [protein]-peptidylproline (omega=0). Its function is as follows. Involved in protein export. Acts as a chaperone by maintaining the newly synthesized protein in an open conformation. Functions as a peptidyl-prolyl cis-trans isomerase. This Ehrlichia ruminantium (strain Gardel) protein is Trigger factor.